Consider the following 165-residue polypeptide: NADPH-dependent 7-cyano-7-deazaguanine reductase (165 aa).

The Thioimide intermediate role is filled by Cys-56. Catalysis depends on Asp-63, which acts as the Proton donor. Residues Val-78–Ser-80 and His-97–Glu-98 contribute to the substrate site.

Belongs to the GTP cyclohydrolase I family. QueF type 1 subfamily.

The protein resides in the cytoplasm. The catalysed reaction is 7-aminomethyl-7-carbaguanine + 2 NADP(+) = 7-cyano-7-deazaguanine + 2 NADPH + 3 H(+). It participates in tRNA modification; tRNA-queuosine biosynthesis. Catalyzes the NADPH-dependent reduction of 7-cyano-7-deazaguanine (preQ0) to 7-aminomethyl-7-deazaguanine (preQ1). This is NADPH-dependent 7-cyano-7-deazaguanine reductase from Bacillus anthracis (strain A0248).